We begin with the raw amino-acid sequence, 231 residues long: ATP phosphoribosyltransferase (231 aa).

It belongs to the ATP phosphoribosyltransferase family. Short subfamily. Heteromultimer composed of HisG and HisZ subunits.

The protein localises to the cytoplasm. It catalyses the reaction 1-(5-phospho-beta-D-ribosyl)-ATP + diphosphate = 5-phospho-alpha-D-ribose 1-diphosphate + ATP. The protein operates within amino-acid biosynthesis; L-histidine biosynthesis; L-histidine from 5-phospho-alpha-D-ribose 1-diphosphate: step 1/9. In terms of biological role, catalyzes the condensation of ATP and 5-phosphoribose 1-diphosphate to form N'-(5'-phosphoribosyl)-ATP (PR-ATP). Has a crucial role in the pathway because the rate of histidine biosynthesis seems to be controlled primarily by regulation of HisG enzymatic activity. This is ATP phosphoribosyltransferase (hisG) from Rhizobium etli (strain ATCC 51251 / DSM 11541 / JCM 21823 / NBRC 15573 / CFN 42).